A 202-amino-acid polypeptide reads, in one-letter code: Small ribosomal subunit protein uS2 (202 aa).

Belongs to the universal ribosomal protein uS2 family. As to quaternary structure, part of the 30S ribosomal subunit.

This chain is Small ribosomal subunit protein uS2, found in Pyrococcus furiosus (strain ATCC 43587 / DSM 3638 / JCM 8422 / Vc1).